A 357-amino-acid polypeptide reads, in one-letter code: Cinnamyl alcohol dehydrogenase 1 (357 aa).

Cys-47 is a Zn(2+) binding site. Position 49 (Thr-49) interacts with NADP(+). The Zn(2+) site is built by His-69, Glu-70, Cys-100, Cys-103, Cys-106, Cys-114, and Cys-163. NADP(+) is bound by residues Thr-167, Gly-188–Gly-193, Ser-211–Lys-216, Thr-251, Gly-275, and Ser-298–Ile-300.

This sequence belongs to the zinc-containing alcohol dehydrogenase family. In terms of assembly, homodimer. Requires Zn(2+) as cofactor. As to expression, expressed in leaves, mainly in peltate glands.

It carries out the reaction (E)-cinnamyl alcohol + NADP(+) = (E)-cinnamaldehyde + NADPH + H(+). The enzyme catalyses (E)-coniferol + NADP(+) = (E)-coniferaldehyde + NADPH + H(+). It catalyses the reaction (E)-sinapyl alcohol + NADP(+) = (E)-sinapaldehyde + NADPH + H(+). The catalysed reaction is (E)-4-coumaroyl alcohol + NADP(+) = (E)-4-coumaraldehyde + NADPH + H(+). It carries out the reaction (E)-caffeyl alcohol + NADP(+) = (E)-caffeyl aldehyde + NADPH + H(+). The protein operates within aromatic compound metabolism; phenylpropanoid biosynthesis. With respect to regulation, 60% inhibition by 5 mM Ca(+), Mg(+) or Cu(+). Its function is as follows. Involved in the production of citral, a mixture of geranial and neral with a strong lemony scent. Reversibly oxidizes geraniol to produce geranial at half the efficiency compared with its activity with cinnamyl alcohol. Does not use nerol and neral as substrates. In Ocimum basilicum (Sweet basil), this protein is Cinnamyl alcohol dehydrogenase 1 (CAD1).